We begin with the raw amino-acid sequence, 464 residues long: Leucine-rich repeat-containing protein 34 (464 aa).

The disordered stretch occupies residues 1-48; the sequence is MAAQPPRPVGERSMGSSREAARAPARSPAWASTQASTPGAALAVQRES. A compositionally biased stretch (low complexity) spans 16 to 32; it reads SSREAARAPARSPAWAS. LRR repeat units follow at residues 295-315 and 323-345; these read SLRYLDVSCNKITHDGMVYLA and TLEVIDLSFNRIENAGANYLSET.

In terms of assembly, interacts with NPM1 and NCL.

Its subcellular location is the nucleus. It localises to the nucleolus. The protein resides in the cytoplasm. Functionally, highly expressed in stem cells where it may be involved in regulation of pluripotency. In embryonic stem cells (ESCs), important for normal expression of the pluripotency regulators POU5F1/OCT4 and KLF4. Also important for expression of the ectodermal marker gene NES and the endodermal marker gene GATA4. Promotes stem cell proliferation in vitro. In Homo sapiens (Human), this protein is Leucine-rich repeat-containing protein 34 (LRRC34).